Here is a 96-residue protein sequence, read N- to C-terminus: Co-chaperonin GroES (96 aa).

The protein belongs to the GroES chaperonin family. As to quaternary structure, heptamer of 7 subunits arranged in a ring. Interacts with the chaperonin GroEL.

The protein localises to the cytoplasm. Functionally, together with the chaperonin GroEL, plays an essential role in assisting protein folding. The GroEL-GroES system forms a nano-cage that allows encapsulation of the non-native substrate proteins and provides a physical environment optimized to promote and accelerate protein folding. GroES binds to the apical surface of the GroEL ring, thereby capping the opening of the GroEL channel. This chain is Co-chaperonin GroES, found in Dechloromonas aromatica (strain RCB).